Consider the following 547-residue polypeptide: MEKLLHEALQNGCKLHKSVEFIQSRDDNACFGSYIAVAQNDIAPDQLLISCPFEYAITYNKAKEELKKLNPNFESCNPHITLCTFLALESLKGIQSKWYGYIEYLPKTFNTPLYFNENDNAFLISTNAYSAAQERLHIWKHEYQEALSLHPSPTERFTFDLYIWSATVFSSRCFSSNLIYKDSESTPILLPLIDSLNHKPKQPILWNSDFQDEKSVQLISQELVAKGNQLFNNYGPKGNEELLMGYGFCLPDNPFDTVTLKVAIHPDLPHKDQKAAILENDCQFQLSNLVFFLPKSPDKEIFQKILQCLAVVTASSLELRKLTAHLLTGDLASYVPSLRGQIKSLEVLLMYIDSRADLLLKSNPQVSPTSERQVWAKIYRDSQINILQDSITYVKNYMEESLQKTYKPLPNLLQYLILNSISIFLLQHPLFAPLSHAIESLYGSTDAEALVATDEQDILMILICVYCLSISEKLPFSISMLVEGYPAVANPEGVEVFEILDEMFFQQFTNVFGESKHFNKENVSWALQLVNDESLDFSGFTFIIAHN.

In terms of domain architecture, SET spans 17–235 (KSVEFIQSRD…KGNQLFNNYG (219 aa)). Tyr-234 is an S-adenosyl-L-methionine binding site.

Belongs to the class V-like SAM-binding methyltransferase superfamily. RKM1 family.

It is found in the cytoplasm. It localises to the nucleus. Its function is as follows. S-adenosyl-L-methionine-dependent protein-lysine N-methyltransferase that methylates ribosomal protein L23 (rpl23a and rpl23b). This Schizosaccharomyces pombe (strain 972 / ATCC 24843) (Fission yeast) protein is Ribosomal lysine N-methyltransferase set10 (set10).